The following is a 208-amino-acid chain: Na(+)-translocating NADH-quinone reductase subunit D (208 aa).

The next 5 membrane-spanning stretches (helical) occupy residues 42–62, 70–90, 103–123, 131–151, and 178–198; these read IVMT…ISLI, VRII…DQIL, VFVG…AFAM, FVDG…VAFI, and NGLF…IWGI.

The protein belongs to the NqrDE/RnfAE family. As to quaternary structure, composed of six subunits; NqrA, NqrB, NqrC, NqrD, NqrE and NqrF.

It is found in the cell inner membrane. It catalyses the reaction a ubiquinone + n Na(+)(in) + NADH + H(+) = a ubiquinol + n Na(+)(out) + NAD(+). Its function is as follows. NQR complex catalyzes the reduction of ubiquinone-1 to ubiquinol by two successive reactions, coupled with the transport of Na(+) ions from the cytoplasm to the periplasm. NqrA to NqrE are probably involved in the second step, the conversion of ubisemiquinone to ubiquinol. The sequence is that of Na(+)-translocating NADH-quinone reductase subunit D from Pasteurella multocida (strain Pm70).